Reading from the N-terminus, the 215-residue chain is dITP/XTP pyrophosphatase (215 aa).

13 to 18 (THNTGK) serves as a coordination point for substrate. Asp-74 acts as the Proton acceptor in catalysis. Position 74 (Asp-74) interacts with Mg(2+). Residues Ser-75, 163 to 166 (FGFD), Lys-186, and 199 to 200 (HR) contribute to the substrate site.

It belongs to the HAM1 NTPase family. Homodimer. Requires Mg(2+) as cofactor.

It carries out the reaction XTP + H2O = XMP + diphosphate + H(+). It catalyses the reaction dITP + H2O = dIMP + diphosphate + H(+). The enzyme catalyses ITP + H2O = IMP + diphosphate + H(+). Its function is as follows. Pyrophosphatase that catalyzes the hydrolysis of nucleoside triphosphates to their monophosphate derivatives, with a high preference for the non-canonical purine nucleotides XTP (xanthosine triphosphate), dITP (deoxyinosine triphosphate) and ITP. Seems to function as a house-cleaning enzyme that removes non-canonical purine nucleotides from the nucleotide pool, thus preventing their incorporation into DNA/RNA and avoiding chromosomal lesions. This is dITP/XTP pyrophosphatase from Bartonella quintana (strain Toulouse) (Rochalimaea quintana).